A 264-amino-acid polypeptide reads, in one-letter code: Thymidylate synthase (264 aa).

Arg21 is a binding site for dUMP. Residue His51 coordinates (6R)-5,10-methylene-5,6,7,8-tetrahydrofolate. Residue 126 to 127 (RR) participates in dUMP binding. Cys146 functions as the Nucleophile in the catalytic mechanism. DUMP-binding positions include 166-169 (RSAD), Asn177, and 207-209 (HLY). Asp169 is a (6R)-5,10-methylene-5,6,7,8-tetrahydrofolate binding site. Ala263 lines the (6R)-5,10-methylene-5,6,7,8-tetrahydrofolate pocket.

The protein belongs to the thymidylate synthase family. Bacterial-type ThyA subfamily. As to quaternary structure, homodimer.

It is found in the cytoplasm. The catalysed reaction is dUMP + (6R)-5,10-methylene-5,6,7,8-tetrahydrofolate = 7,8-dihydrofolate + dTMP. Its pathway is pyrimidine metabolism; dTTP biosynthesis. Functionally, catalyzes the reductive methylation of 2'-deoxyuridine-5'-monophosphate (dUMP) to 2'-deoxythymidine-5'-monophosphate (dTMP) while utilizing 5,10-methylenetetrahydrofolate (mTHF) as the methyl donor and reductant in the reaction, yielding dihydrofolate (DHF) as a by-product. This enzymatic reaction provides an intracellular de novo source of dTMP, an essential precursor for DNA biosynthesis. The sequence is that of Thymidylate synthase from Dechloromonas aromatica (strain RCB).